A 106-amino-acid chain; its full sequence is MLVLTTETIPGKGIKEVKGLVKGSTVRCKNIGKDIASSFKNLVGGEMNSYTEILTEARQIAIGRMVDEAESLGANAIIEMRLVSSSLAAGAAEMVAYGTAVIYEDA.

The protein belongs to the UPF0145 family.

The chain is UPF0145 protein CPE0882 from Clostridium perfringens (strain 13 / Type A).